Reading from the N-terminus, the 211-residue chain is N-(5'-phosphoribosyl)anthranilate isomerase (211 aa).

The protein belongs to the TrpF family.

The enzyme catalyses N-(5-phospho-beta-D-ribosyl)anthranilate = 1-(2-carboxyphenylamino)-1-deoxy-D-ribulose 5-phosphate. The protein operates within amino-acid biosynthesis; L-tryptophan biosynthesis; L-tryptophan from chorismate: step 3/5. The protein is N-(5'-phosphoribosyl)anthranilate isomerase of Pseudomonas paraeruginosa (strain DSM 24068 / PA7) (Pseudomonas aeruginosa (strain PA7)).